We begin with the raw amino-acid sequence, 532 residues long: Flavin-containing monooxygenase 3 (532 aa).

FAD-binding positions include 9–13 (GAGVS), glutamate 32, 40–41 (LW), and 61–62 (NS). Residues 60-61 (TN) and 195-198 (SGCD) each bind NADP(+). Serine 401 is subject to Phosphoserine. Residues 510–530 (FFFHWLKPFAIPILLIAVFLG) traverse the membrane as a helical segment.

It belongs to the FMO family. FAD is required as a cofactor. As to expression, liver.

It localises to the microsome membrane. Its subcellular location is the endoplasmic reticulum membrane. It catalyses the reaction trimethylamine + NADPH + O2 = trimethylamine N-oxide + NADP(+) + H2O. The catalysed reaction is N,N-dimethylaniline + NADPH + O2 + H(+) = N,N-dimethylaniline N-oxide + NADP(+) + H2O. The enzyme catalyses hypotaurine + NADPH + O2 + H(+) = taurine + NADP(+) + H2O. It carries out the reaction (S)-nicotine + NADPH + O2 = trans-(S)-nicotine N(1')-oxide + NADP(+) + H2O. It catalyses the reaction albendazole + NADPH + O2 + H(+) = albendazole S-oxide + NADP(+) + H2O. Functionally, essential hepatic enzyme that catalyzes the oxygenation of a wide variety of nitrogen- and sulfur-containing compounds including drugs as well as dietary compounds. Plays an important role in the metabolism of trimethylamine (TMA), via the production of trimethylamine N-oxide (TMAO) metabolite. TMA is generated by the action of gut microbiota using dietary precursors such as choline, choline containing compounds, betaine or L-carnitine. By regulating TMAO concentration, FMO3 directly impacts both platelet responsiveness and rate of thrombus formation. The sequence is that of Flavin-containing monooxygenase 3 (FMO3) from Macaca mulatta (Rhesus macaque).